The primary structure comprises 273 residues: Ribosomal RNA small subunit methyltransferase A (273 aa).

Positions 18, 20, 45, 66, 91, and 113 each coordinate S-adenosyl-L-methionine.

It belongs to the class I-like SAM-binding methyltransferase superfamily. rRNA adenine N(6)-methyltransferase family. RsmA subfamily.

It is found in the cytoplasm. It catalyses the reaction adenosine(1518)/adenosine(1519) in 16S rRNA + 4 S-adenosyl-L-methionine = N(6)-dimethyladenosine(1518)/N(6)-dimethyladenosine(1519) in 16S rRNA + 4 S-adenosyl-L-homocysteine + 4 H(+). Specifically dimethylates two adjacent adenosines (A1518 and A1519) in the loop of a conserved hairpin near the 3'-end of 16S rRNA in the 30S particle. May play a critical role in biogenesis of 30S subunits. The polypeptide is Ribosomal RNA small subunit methyltransferase A (Salmonella agona (strain SL483)).